Here is a 280-residue protein sequence, read N- to C-terminus: 2-dehydro-3-deoxyphosphooctonate aldolase (280 aa).

This sequence belongs to the KdsA family.

Its subcellular location is the cytoplasm. The enzyme catalyses D-arabinose 5-phosphate + phosphoenolpyruvate + H2O = 3-deoxy-alpha-D-manno-2-octulosonate-8-phosphate + phosphate. The protein operates within carbohydrate biosynthesis; 3-deoxy-D-manno-octulosonate biosynthesis; 3-deoxy-D-manno-octulosonate from D-ribulose 5-phosphate: step 2/3. Its pathway is bacterial outer membrane biogenesis; lipopolysaccharide biosynthesis. The sequence is that of 2-dehydro-3-deoxyphosphooctonate aldolase from Coxiella burnetii (strain CbuK_Q154) (Coxiella burnetii (strain Q154)).